Reading from the N-terminus, the 117-residue chain is Non-specific lipid-transfer protein Lac s 1 (117 aa).

An N-terminal signal peptide occupies residues 1–25 (MARMAMMILCVVLTCMVVATPYTEA). 4 disulfide bridges follow: Cys-29–Cys-76, Cys-39–Cys-53, Cys-54–Cys-99, and Cys-74–Cys-113.

This sequence belongs to the plant LTP family.

In terms of biological role, plant non-specific lipid-transfer proteins transfer phospholipids as well as galactolipids across membranes. May play a role in wax or cutin deposition in the cell walls of expanding epidermal cells and certain secretory tissues. The chain is Non-specific lipid-transfer protein Lac s 1 from Lactuca sativa (Garden lettuce).